A 187-amino-acid polypeptide reads, in one-letter code: Crossover junction endodeoxyribonuclease RuvC (187 aa).

Catalysis depends on residues Asp7, Glu67, and Asp140. Residues Asp7, Glu67, and Asp140 each contribute to the Mg(2+) site.

It belongs to the RuvC family. Homodimer which binds Holliday junction (HJ) DNA. The HJ becomes 2-fold symmetrical on binding to RuvC with unstacked arms; it has a different conformation from HJ DNA in complex with RuvA. In the full resolvosome a probable DNA-RuvA(4)-RuvB(12)-RuvC(2) complex forms which resolves the HJ. Mg(2+) serves as cofactor.

Its subcellular location is the cytoplasm. It catalyses the reaction Endonucleolytic cleavage at a junction such as a reciprocal single-stranded crossover between two homologous DNA duplexes (Holliday junction).. Functionally, the RuvA-RuvB-RuvC complex processes Holliday junction (HJ) DNA during genetic recombination and DNA repair. Endonuclease that resolves HJ intermediates. Cleaves cruciform DNA by making single-stranded nicks across the HJ at symmetrical positions within the homologous arms, yielding a 5'-phosphate and a 3'-hydroxyl group; requires a central core of homology in the junction. The consensus cleavage sequence is 5'-(A/T)TT(C/G)-3'. Cleavage occurs on the 3'-side of the TT dinucleotide at the point of strand exchange. HJ branch migration catalyzed by RuvA-RuvB allows RuvC to scan DNA until it finds its consensus sequence, where it cleaves and resolves the cruciform DNA. This is Crossover junction endodeoxyribonuclease RuvC from Chlorobaculum parvum (strain DSM 263 / NCIMB 8327) (Chlorobium vibrioforme subsp. thiosulfatophilum).